The primary structure comprises 279 residues: Type II iodothyronine deiodinase (279 aa).

The Lumenal segment spans residues 1 to 7 (MGLLSAD). A helical; Signal-anchor for type III membrane protein membrane pass occupies residues 8 to 28 (LLITLQILPVFFSNCLFLALY). At 29–279 (DSVILLKHMV…TEDLSTDVSL (251 aa)) the chain is on the cytoplasmic side. Sec-132 is an active-site residue. Residues Sec-132 and Sec-265 are each a non-standard amino acid (selenocysteine).

The protein belongs to the iodothyronine deiodinase family. As to quaternary structure, predominantly monomer. Can form homodimers but homodimerization is not essential for enzyme activity. Highly expressed in liver and in various parts of the brain including telencephalon, hippocampus, cerebellum, and brain stem, and weakly expressed in thyroid, lung, and small intestine. Not detected in skeletal muscle, heart atria or ventricle, gizzard or kidney.

It is found in the endoplasmic reticulum membrane. It catalyses the reaction 3,3',5-triiodo-L-thyronine + iodide + A + H(+) = L-thyroxine + AH2. The enzyme catalyses 3,3'-diiodo-L-thyronine + iodide + A + H(+) = 3,3',5'-triiodo-L-thyronine + AH2. It carries out the reaction 3'-iodo-L-thyronine + iodide + A + H(+) = 3',5'-diiodo-L-thyronine + AH2. The catalysed reaction is 3,3'-diiodothyronamine + iodide + A + H(+) = 3,3',5'-triiodothyronamine + AH2. It catalyses the reaction 3'-iodothyronamine + iodide + A + H(+) = 3',5'-diiodothyronamine + AH2. Not inhibited by N(6)-propylthiouracil. Plays a crucial role in the metabolism of thyroid hormones (TH) and has specific roles in TH activation and inactivation by deiodination. Catalyzes the deiodination of L-thyroxine (T4) to 3,5,3'-triiodothyronine (T3) and 3,3',5'-triiodothyronine (rT3) to 3,3'-diiodothyronine (3,3'-T2) via outer-ring deiodination (ORD). Catalyzes the deiodination of 3',5'-diiodothyronine (3',5'-T2) to 3'-monoiodothyronine (3'-T1) via ORD. Catalyzes the phenolic ring deiodinations of 3,3',5'-triiodothyronamine and 3',5'- diiodothyronamine. This is Type II iodothyronine deiodinase (DIO2) from Gallus gallus (Chicken).